Here is a 410-residue protein sequence, read N- to C-terminus: Phosphoglycerate kinase (410 aa).

Substrate contacts are provided by residues Asp-24–Asn-26, Arg-40, His-63–Arg-66, Arg-122, and Arg-162. Residues Lys-212, Gly-300, Glu-331, and Gly-360–Ser-363 each bind ATP.

Belongs to the phosphoglycerate kinase family. As to quaternary structure, monomer.

The protein localises to the cytoplasm. It catalyses the reaction (2R)-3-phosphoglycerate + ATP = (2R)-3-phospho-glyceroyl phosphate + ADP. It participates in carbohydrate degradation; glycolysis; pyruvate from D-glyceraldehyde 3-phosphate: step 2/5. The polypeptide is Phosphoglycerate kinase (Nocardia farcinica (strain IFM 10152)).